A 606-amino-acid chain; its full sequence is Homeobox protein B-H1 (606 aa).

The segment covering 1–14 (MKDSMSILTQTPSE) has biased composition (polar residues). Disordered regions lie at residues 1–65 (MKDS…PAVA), 104–188 (YKQQ…HPHA), 261–340 (APAG…AFTD), and 508–606 (AAAN…QIQV). The span at 21 to 40 (QLHHHLSHHHHPALHHHPVL) shows a compositional bias: basic residues. The span at 41–65 (QHHYSLQQQHQQQQQQQPPAPPAVA) shows a compositional bias: low complexity. The segment covering 108 to 118 (QQHHHHHHQSH) has biased composition (basic residues). A compositionally biased stretch (low complexity) spans 119-138 (HNNNNHSGGSSGGTSPTHHN). Basic residues predominate over residues 166 to 188 (HHLHPQSHPHPHPHPHSHPHPHA). A compositionally biased stretch (acidic residues) spans 266 to 284 (ELDDSSDYHEENEDCDSDE). The span at 286–295 (GSAGGGGGGS) shows a compositional bias: gly residues. The span at 297-314 (HMDDHSVCSNGGKDDDGN) shows a compositional bias: basic and acidic residues. A compositionally biased stretch (polar residues) spans 315 to 325 (SIKSGSTSDMS). A DNA-binding region (homeobox) is located at residues 331-390 (QRKARTAFTDHQLQTLEKSFERQKYLSVQERQELAHKLDLSDCQVKTWYQNRRTKWMRQT). The segment covering 513-522 (GGPPPPPPPS) has biased composition (pro residues). Residues 523–534 (SAAAATGGSPSP) are compositionally biased toward low complexity. Over residues 561–576 (ASPPLPLPLARPPSTP) the composition is skewed to pro residues.

This sequence belongs to the Antp homeobox family. In terms of tissue distribution, abundant in the eye-antenna imaginal disk.

The protein resides in the nucleus. Functionally required in R1 and R6 receptor cells and primary pigment cells for normal eye development. This Drosophila ananassae (Fruit fly) protein is Homeobox protein B-H1 (B-H1).